A 455-amino-acid chain; its full sequence is Neuronal acetylcholine receptor subunit beta-3 (455 aa).

A signal peptide spans 1 to 20; that stretch reads MLCLMLCVLCWSRSDVAALG. Residues 21–229 lie on the Extracellular side of the membrane; sequence SVVENEDALL…VTYSFVLRRL (209 aa). Asn-48 and Asn-163 each carry an N-linked (GlcNAc...) asparagine glycan. Cys-150 and Cys-164 are oxidised to a cystine. A run of 3 helical transmembrane segments spans residues 230-254, 262-279, and 296-317; these read PLFYTLFLIIPCLGLSFLTVLVFYL, LSLSTSVLVSLTVFLLVI, and YLLFIMIFVTLSIIVTVFVINV. Residues 318-425 lie on the Cytoplasmic side of the membrane; that stretch reads HHRSSATYHP…WKFVAQVLDR (108 aa). The helical transmembrane segment at 426–444 threads the bilayer; the sequence is IFLWLFLVVSVTGSVLIFT.

This sequence belongs to the ligand-gated ion channel (TC 1.A.9) family. Acetylcholine receptor (TC 1.A.9.1) subfamily. Beta-3/CHRNB3 sub-subfamily. As to quaternary structure, neuronal AChR seems to be composed of two different type of subunits: alpha and beta. CHRNB3/beta-3 subunit is only able to form functional nAChRs when co-assembled with another beta subunit. Participates in pentameric assemblies along with CHRNA4/alpha-4 and CHRNB2/beta-2 subunits and with CHRNA6/alpha-6 as well, forming stoichiometries such as (CHRNA3:CHRNB4)2:CHRNB3, (CHRNA4:CHRNB2)2:CHRNB3 or (CHRNA6:CHRNB2)2:CHRNB3. As to expression, relatively abundant in the developing retina and in the trigeminal ganglion.

It is found in the synaptic cell membrane. The protein resides in the cell membrane. It carries out the reaction Ca(2+)(in) = Ca(2+)(out). The catalysed reaction is K(+)(in) = K(+)(out). It catalyses the reaction Na(+)(in) = Na(+)(out). Its activity is regulated as follows. Activated by a myriad of ligands such as acetylcholine, cytisine, nicotine, choline and epibatidine. Component of neuronal acetylcholine receptors (nAChRs) that function as pentameric, ligand-gated cation channels with high calcium permeability among other activities. nAChRs are excitatory neurotrasnmitter receptors formed by a collection of nAChR subunits known to mediate synaptic transmission in the nervous system and the neuromuscular junction. Each nAchR subunit confers differential attributes to channel properties, including activation, deactivation and desensitization kinetics, pH sensitivity, cation permeability, and binding to allosteric modulators. Has an accessory rather than functional role and is only able to form functional nAChRs when co-assembled with another beta subunit. Participates in pentameric assemblies along with CHRNA3, CHRNA4, CHRNA6, CHRNB2 and CHRNB4. Modulates receptor assembly and increases receptor sensitivity to nicotine when associated with CHRNB2, CHRNA4 and/or CHRNA6 as well as CHRNA3 and CHRNB4. Seems to play a role in nicotine addiction. This chain is Neuronal acetylcholine receptor subunit beta-3 (CHRNB3), found in Gallus gallus (Chicken).